The primary structure comprises 116 residues: Ferredoxin-like protein in nif region (116 aa).

In terms of domain architecture, 4Fe-4S ferredoxin-type spans 2-29; it reads AYTITSQCISCKLCSSVCPTGAIKIAEN. Iron-sulfur cluster is bound by residues Cys9, Cys12, Cys15, and Cys19.

This Nostoc sp. (strain PCC 7120 / SAG 25.82 / UTEX 2576) protein is Ferredoxin-like protein in nif region (fdxN).